The following is a 423-amino-acid chain: Histidine--tRNA ligase (423 aa).

It belongs to the class-II aminoacyl-tRNA synthetase family. Homodimer.

It is found in the cytoplasm. It carries out the reaction tRNA(His) + L-histidine + ATP = L-histidyl-tRNA(His) + AMP + diphosphate + H(+). The sequence is that of Histidine--tRNA ligase from Moorella thermoacetica (strain ATCC 39073 / JCM 9320).